A 236-amino-acid chain; its full sequence is 2-C-methyl-D-erythritol 4-phosphate cytidylyltransferase (236 aa).

The protein belongs to the IspD/TarI cytidylyltransferase family. IspD subfamily.

The catalysed reaction is 2-C-methyl-D-erythritol 4-phosphate + CTP + H(+) = 4-CDP-2-C-methyl-D-erythritol + diphosphate. The protein operates within isoprenoid biosynthesis; isopentenyl diphosphate biosynthesis via DXP pathway; isopentenyl diphosphate from 1-deoxy-D-xylulose 5-phosphate: step 2/6. Functionally, catalyzes the formation of 4-diphosphocytidyl-2-C-methyl-D-erythritol from CTP and 2-C-methyl-D-erythritol 4-phosphate (MEP). This chain is 2-C-methyl-D-erythritol 4-phosphate cytidylyltransferase, found in Azoarcus sp. (strain BH72).